The chain runs to 396 residues: Pectinesterase (396 aa).

A signal peptide spans 1-21 (MQSKTLYLKATALLGGCTVFA). Residue T174 participates in substrate binding. Residue D232 is the Proton donor of the active site. Catalysis depends on D259, which acts as the Nucleophile. The substrate site is built by R324 and W326.

It belongs to the pectinesterase family.

It is found in the secreted. The catalysed reaction is [(1-&gt;4)-alpha-D-galacturonosyl methyl ester](n) + n H2O = [(1-&gt;4)-alpha-D-galacturonosyl](n) + n methanol + n H(+). Its pathway is glycan metabolism; pectin degradation; 2-dehydro-3-deoxy-D-gluconate from pectin: step 1/5. Its function is as follows. Involved in maceration and soft-rotting of plant tissue. The protein is Pectinesterase (pme) of Ralstonia nicotianae (strain ATCC BAA-1114 / GMI1000) (Ralstonia solanacearum).